We begin with the raw amino-acid sequence, 127 residues long: uncharacterized protein (127 aa).

The signal sequence occupies residues 1–26 (MKAIYALLAVVALALVAVSLFSQSDS).

This is an uncharacterized protein from Archaeoglobus fulgidus (strain ATCC 49558 / DSM 4304 / JCM 9628 / NBRC 100126 / VC-16).